The following is a 369-amino-acid chain: UDP-N-acetyl-3-dehydro-alpha-D-glucosamine 3-aminotranferase (369 aa).

Position 190 is an N6-(pyridoxal phosphate)lysine (K190).

Belongs to the DegT/DnrJ/EryC1 family. It depends on pyridoxal 5'-phosphate as a cofactor.

The enzyme catalyses UDP-2-acetamido-3-amino-2,3-dideoxy-alpha-D-glucopyranose + 2-oxoglutarate = UDP-2-acetamido-3-dehydro-2-deoxy-alpha-D-glucopyranose + L-glutamate. Its pathway is bacterial outer membrane biogenesis; LPS lipid A biosynthesis. Functionally, aminotranferase involved in the synthesis of 2,3-diamino-2,3-dideoxy-D-glucopyranose (GlcN3N), which is a component of lipid A in some species. Catalyzes the amination of UDP-2-acetamido-3-dehydro-2-deoxy-alpha-D-glucopyranose (UDP-3-oxo-GlcNAc) to UDP-2-acetamido-3-amino-2,3-dideoxy-alpha-D-glucopyranose (UDP-GlcNAc3N), using L-glutamate as the amine donor. Other amine donors, such as alanine and glutamine, can substitute for glutamate, but product formation is slower. The chain is UDP-N-acetyl-3-dehydro-alpha-D-glucosamine 3-aminotranferase from Acidithiobacillus ferrooxidans (strain ATCC 23270 / DSM 14882 / CIP 104768 / NCIMB 8455) (Ferrobacillus ferrooxidans (strain ATCC 23270)).